An 867-amino-acid chain; its full sequence is Bifunctional cis-abienol synthase, chloroplastic (867 aa).

Residues 1–49 (MALPVYSLKSHIPITTIASAKMNYTPNKGMITANGRSRRIRLSPNKIVA) constitute a chloroplast transit peptide. Residue Lys-270 coordinates substrate. A DXDD motif motif is present at residues 403–406 (DIDD). Substrate is bound at residue Lys-490. Residues Asp-622, Asp-626, Asn-763, Asp-764, Thr-767, and Glu-771 each contribute to the Mg(2+) site. The short motif at 622-626 (DDLYD) is the DDXXD motif element.

It belongs to the terpene synthase family. Tpsd subfamily. It depends on Mg(2+) as a cofactor.

The protein localises to the plastid. It localises to the chloroplast. It catalyses the reaction 8-hydroxycopalyl diphosphate = cis-abienol + diphosphate. The enzyme catalyses (2E,6E,10E)-geranylgeranyl diphosphate + H2O = 8-hydroxycopalyl diphosphate. It functions in the pathway terpene metabolism; oleoresin biosynthesis. Its function is as follows. Involved in the biosynthesis of cis-abienol, a labdane diterpene that can be used as synthesis precursor of ambergris substitution fragance products. Bifunctional class I/II enzyme in which both the bicyclization and water capture occur in the class II active site, resulting in an intermediary labda-13-en-8-ol diphosphate, which undergoes cleavage of the diphosphate group and final deprotonation at the class I active site. No activity with copalyl diphosphate as substrate. This is Bifunctional cis-abienol synthase, chloroplastic (CAS) from Abies balsamea (Balsam fir).